Consider the following 380-residue polypeptide: uncharacterized protein (380 aa).

2 disordered regions span residues 278–323 (AATI…PRVA) and 345–368 (SLPGRESTPSDDGGSLHPSGRPRR). The segment covering 301–319 (RNGPRRPARRGTSRGRRCA) has biased composition (basic residues).

This is an uncharacterized protein from Mycobacterium tuberculosis (strain CDC 1551 / Oshkosh).